The chain runs to 286 residues: Elongation factor Ts (286 aa).

The involved in Mg(2+) ion dislocation from EF-Tu stretch occupies residues 82 to 85 (TDFV).

Belongs to the EF-Ts family.

Its subcellular location is the cytoplasm. Associates with the EF-Tu.GDP complex and induces the exchange of GDP to GTP. It remains bound to the aminoacyl-tRNA.EF-Tu.GTP complex up to the GTP hydrolysis stage on the ribosome. This is Elongation factor Ts from Desulfovibrio desulfuricans (strain ATCC 27774 / DSM 6949 / MB).